Here is a 178-residue protein sequence, read N- to C-terminus: 6,7-dimethyl-8-ribityllumazine synthase (178 aa).

5-amino-6-(D-ribitylamino)uracil-binding positions include Phe-23, 61 to 63 (SFE), and 85 to 87 (AVI). A (2S)-2-hydroxy-3-oxobutyl phosphate-binding site is contributed by 90–91 (QT). Catalysis depends on His-93, which acts as the Proton donor. Tyr-118 contributes to the 5-amino-6-(D-ribitylamino)uracil binding site. Arg-132 provides a ligand contact to (2S)-2-hydroxy-3-oxobutyl phosphate.

The protein belongs to the DMRL synthase family.

The enzyme catalyses (2S)-2-hydroxy-3-oxobutyl phosphate + 5-amino-6-(D-ribitylamino)uracil = 6,7-dimethyl-8-(1-D-ribityl)lumazine + phosphate + 2 H2O + H(+). It functions in the pathway cofactor biosynthesis; riboflavin biosynthesis; riboflavin from 2-hydroxy-3-oxobutyl phosphate and 5-amino-6-(D-ribitylamino)uracil: step 1/2. Catalyzes the formation of 6,7-dimethyl-8-ribityllumazine by condensation of 5-amino-6-(D-ribitylamino)uracil with 3,4-dihydroxy-2-butanone 4-phosphate. This is the penultimate step in the biosynthesis of riboflavin. The protein is 6,7-dimethyl-8-ribityllumazine synthase of Thermosynechococcus vestitus (strain NIES-2133 / IAM M-273 / BP-1).